Consider the following 1243-residue polypeptide: ATP-dependent helicase/nuclease subunit A (1243 aa).

Residues Val2–Arg475 enclose the UvrD-like helicase ATP-binding domain. Ala23–Thr30 lines the ATP pocket. In terms of domain architecture, UvrD-like helicase C-terminal spans Ala502–Gly803.

This sequence belongs to the helicase family. AddA subfamily. Heterodimer of AddA and AddB/RexB. The cofactor is Mg(2+).

The catalysed reaction is Couples ATP hydrolysis with the unwinding of duplex DNA by translocating in the 3'-5' direction.. It catalyses the reaction ATP + H2O = ADP + phosphate + H(+). In terms of biological role, the heterodimer acts as both an ATP-dependent DNA helicase and an ATP-dependent, dual-direction single-stranded exonuclease. Recognizes the chi site generating a DNA molecule suitable for the initiation of homologous recombination. The AddA nuclease domain is required for chi fragment generation; this subunit has the helicase and 3' -&gt; 5' nuclease activities. The polypeptide is ATP-dependent helicase/nuclease subunit A (Oceanobacillus iheyensis (strain DSM 14371 / CIP 107618 / JCM 11309 / KCTC 3954 / HTE831)).